Here is a 185-residue protein sequence, read N- to C-terminus: Ribosome-recycling factor (185 aa).

The protein belongs to the RRF family.

Its subcellular location is the cytoplasm. Functionally, responsible for the release of ribosomes from messenger RNA at the termination of protein biosynthesis. May increase the efficiency of translation by recycling ribosomes from one round of translation to another. This Myxococcus xanthus (strain DK1622) protein is Ribosome-recycling factor.